The sequence spans 613 residues: Dihydroxy-acid dehydratase (613 aa).

Residue Asp-81 participates in Mg(2+) binding. Cys-122 is a binding site for [2Fe-2S] cluster. Mg(2+) is bound by residues Asp-123 and Lys-124. N6-carboxylysine is present on Lys-124. Cys-193 provides a ligand contact to [2Fe-2S] cluster. Glu-489 contributes to the Mg(2+) binding site. The active-site Proton acceptor is the Ser-515.

The protein belongs to the IlvD/Edd family. Homodimer. It depends on [2Fe-2S] cluster as a cofactor. Mg(2+) is required as a cofactor.

The catalysed reaction is (2R)-2,3-dihydroxy-3-methylbutanoate = 3-methyl-2-oxobutanoate + H2O. It carries out the reaction (2R,3R)-2,3-dihydroxy-3-methylpentanoate = (S)-3-methyl-2-oxopentanoate + H2O. The protein operates within amino-acid biosynthesis; L-isoleucine biosynthesis; L-isoleucine from 2-oxobutanoate: step 3/4. It participates in amino-acid biosynthesis; L-valine biosynthesis; L-valine from pyruvate: step 3/4. Functionally, functions in the biosynthesis of branched-chain amino acids. Catalyzes the dehydration of (2R,3R)-2,3-dihydroxy-3-methylpentanoate (2,3-dihydroxy-3-methylvalerate) into 2-oxo-3-methylpentanoate (2-oxo-3-methylvalerate) and of (2R)-2,3-dihydroxy-3-methylbutanoate (2,3-dihydroxyisovalerate) into 2-oxo-3-methylbutanoate (2-oxoisovalerate), the penultimate precursor to L-isoleucine and L-valine, respectively. In Pseudomonas putida (strain W619), this protein is Dihydroxy-acid dehydratase.